The chain runs to 395 residues: Zinc finger protein 200 (395 aa).

The tract at residues 157-208 is disordered; it reads VNGSNPEGEDPEREPVENEDYREKSSDDDEMDSSLVSQQPPDNQEKERLNTS. A compositionally biased stretch (basic and acidic residues) spans 169-181; that stretch reads REPVENEDYREKS. An interaction with PRMT3 region spans residues 246–395; the sequence is RRTRRWYTCP…HSACKTRKQK (150 aa). 5 C2H2-type zinc fingers span residues 252 to 274, 280 to 302, 308 to 330, 336 to 358, and 364 to 386; these read YTCPLCGKQFNESSYLISHQRTH, YDCNHCGKSFNHKTNLNKHERIH, YSCSQCGKNFRQNSHRSRHEGIH, FKCPECGKTFPKNEEFVLHLQSH, and YGCKKCGRRFGRLSNCTRHEKTH.

In terms of assembly, interacts (via C-terminus) with PRMT3 (via zinc-finger); the interaction is direct and required to localize protein arginine N-methyltransferase PRMT3 to the nucleus and inhibit its proteasomal degradation. Highly expressed in testis, weakly expressed in spleen, thymus, prostate, ovary, small intestine colon and peripheral blood leukocytes.

The protein resides in the nucleus. Functionally, localizes protein arginine N-methyltransferase PRMT3 to the nucleus. This is Zinc finger protein 200 (ZNF200) from Homo sapiens (Human).